Consider the following 345-residue polypeptide: Phosphate acyltransferase (345 aa).

The protein belongs to the PlsX family. As to quaternary structure, homodimer. Probably interacts with PlsY.

The protein resides in the cytoplasm. The enzyme catalyses a fatty acyl-[ACP] + phosphate = an acyl phosphate + holo-[ACP]. It functions in the pathway lipid metabolism; phospholipid metabolism. Functionally, catalyzes the reversible formation of acyl-phosphate (acyl-PO(4)) from acyl-[acyl-carrier-protein] (acyl-ACP). This enzyme utilizes acyl-ACP as fatty acyl donor, but not acyl-CoA. This chain is Phosphate acyltransferase, found in Limosilactobacillus fermentum (strain NBRC 3956 / LMG 18251) (Lactobacillus fermentum).